Reading from the N-terminus, the 382-residue chain is F-box protein At3g19470 (382 aa).

The 44-residue stretch at 1-44 (MYNLPRDLPEEVLCRIPLTSLRPVRSTCKKWSTLSKCGSFAKKH) folds into the F-box domain.

The polypeptide is F-box protein At3g19470 (Arabidopsis thaliana (Mouse-ear cress)).